A 114-amino-acid polypeptide reads, in one-letter code: Probable 4-amino-4-deoxy-L-arabinose-phosphoundecaprenol flippase subunit ArnE (114 aa).

The next 3 helical transmembrane spans lie at 41–61, 64–84, and 94–114; these read PWLIASVVALGSGMLLWIYLL, LPLSMAYPMLSINLVLVLIGS, and YHNWLGAGAIIIGALLLGGLL. Residues 53-112 enclose the EamA domain; that stretch reads GMLLWIYLLQRLPLSMAYPMLSINLVLVLIGSRLFFHEQISYHNWLGAGAIIIGALLLGG.

It belongs to the ArnE family. In terms of assembly, heterodimer of ArnE and ArnF.

It is found in the cell inner membrane. The protein operates within bacterial outer membrane biogenesis; lipopolysaccharide biosynthesis. Its function is as follows. Translocates 4-amino-4-deoxy-L-arabinose-phosphoundecaprenol (alpha-L-Ara4N-phosphoundecaprenol) from the cytoplasmic to the periplasmic side of the inner membrane. This Aeromonas salmonicida (strain A449) protein is Probable 4-amino-4-deoxy-L-arabinose-phosphoundecaprenol flippase subunit ArnE.